The following is a 301-amino-acid chain: N-acetylmuramic acid 6-phosphate etherase (301 aa).

The SIS domain occupies 57–220 (TYEKMLFGGR…STSLMIKKGK (164 aa)). Catalysis depends on E85, which acts as the Proton donor. E116 is an active-site residue.

It belongs to the GCKR-like family. MurNAc-6-P etherase subfamily. As to quaternary structure, homodimer.

The enzyme catalyses N-acetyl-D-muramate 6-phosphate + H2O = N-acetyl-D-glucosamine 6-phosphate + (R)-lactate. It participates in amino-sugar metabolism; N-acetylmuramate degradation. Specifically catalyzes the cleavage of the D-lactyl ether substituent of MurNAc 6-phosphate, producing GlcNAc 6-phosphate and D-lactate. In Clostridium botulinum (strain Eklund 17B / Type B), this protein is N-acetylmuramic acid 6-phosphate etherase.